The following is a 714-amino-acid chain: Phosphate acetyltransferase (714 aa).

The phosphate acetyltransferase stretch occupies residues 391-714 (AFRYQLTELA…LTAIQSAQQQ (324 aa)).

It in the N-terminal section; belongs to the CobB/CobQ family. In the C-terminal section; belongs to the phosphate acetyltransferase and butyryltransferase family. In terms of assembly, homohexamer.

The protein localises to the cytoplasm. The enzyme catalyses acetyl-CoA + phosphate = acetyl phosphate + CoA. The protein operates within metabolic intermediate biosynthesis; acetyl-CoA biosynthesis; acetyl-CoA from acetate: step 2/2. Its activity is regulated as follows. Inhibited by NADH and ATP. Pyruvate and PEP act as activators of the acetyl phosphate forming reaction while inhibiting the formation of acetyl-CoA. Its function is as follows. Involved in acetate metabolism. Catalyzes the reversible interconversion of acetyl-CoA and acetyl phosphate. The direction of the overall reaction changes depending on growth conditions. On minimal medium acetyl-CoA is generated. In rich medium acetyl-CoA is converted to acetate and allowing the cell to dump the excess of acetylation potential in exchange for energy in the form of ATP. The main pathway for acetate production during exponential phase. The chain is Phosphate acetyltransferase (pta) from Escherichia coli (strain K12).